The primary structure comprises 641 residues: 1-deoxy-D-xylulose-5-phosphate synthase (641 aa).

Residues His79 and 120-122 (GHS) contribute to the thiamine diphosphate site. Asp151 lines the Mg(2+) pocket. Thiamine diphosphate-binding positions include 152–153 (GS), Asn180, Tyr290, and Glu372. A Mg(2+)-binding site is contributed by Asn180.

This sequence belongs to the transketolase family. DXPS subfamily. In terms of assembly, homodimer. Mg(2+) is required as a cofactor. The cofactor is thiamine diphosphate.

It catalyses the reaction D-glyceraldehyde 3-phosphate + pyruvate + H(+) = 1-deoxy-D-xylulose 5-phosphate + CO2. Its pathway is metabolic intermediate biosynthesis; 1-deoxy-D-xylulose 5-phosphate biosynthesis; 1-deoxy-D-xylulose 5-phosphate from D-glyceraldehyde 3-phosphate and pyruvate: step 1/1. Functionally, catalyzes the acyloin condensation reaction between C atoms 2 and 3 of pyruvate and glyceraldehyde 3-phosphate to yield 1-deoxy-D-xylulose-5-phosphate (DXP). This Rhodopseudomonas palustris (strain TIE-1) protein is 1-deoxy-D-xylulose-5-phosphate synthase.